Reading from the N-terminus, the 569-residue chain is Urease subunit alpha (569 aa).

Positions Gly-131–Leu-569 constitute a Urease domain. His-136, His-138, and Lys-219 together coordinate Ni(2+). Lys-219 is subject to N6-carboxylysine. Substrate is bound at residue His-221. Ni(2+) is bound by residues His-248 and His-274. The Proton donor role is filled by His-322. Asp-362 is a Ni(2+) binding site.

Belongs to the metallo-dependent hydrolases superfamily. Urease alpha subunit family. In terms of assembly, heterotrimer of UreA (gamma), UreB (beta) and UreC (alpha) subunits. Three heterotrimers associate to form the active enzyme. Ni cation serves as cofactor. Carboxylation allows a single lysine to coordinate two nickel ions.

The protein localises to the cytoplasm. It catalyses the reaction urea + 2 H2O + H(+) = hydrogencarbonate + 2 NH4(+). The protein operates within nitrogen metabolism; urea degradation; CO(2) and NH(3) from urea (urease route): step 1/1. The protein is Urease subunit alpha of Synechococcus sp. (strain RCC307).